The primary structure comprises 266 residues: Zinc finger protein CG30 (266 aa).

The RING-type zinc finger occupies 8–63 (CNICFSVAEIKNYFMQPIDRLTMIPVLELDTCKHQLCSMCIRKIRKRKKTPCPLCR).

The protein localises to the host nucleus. Its function is as follows. Plays a role in the proper expression of late and very late genes. This is Zinc finger protein CG30 (CG30) from Bombyx mori nuclear polyhedrosis virus (BmNPV).